Reading from the N-terminus, the 222-residue chain is MKEVQIEAGWKKVLQEEFDKFYFEKLTDFVREEYRQSPIYPPARFIFRAFDTCPFDRVKVVILGQDPYHEPGQAEGLAFSVPTGIPIPPSLRNICEEIRTDTGQPAHIDGGSLLPWVEQGVLLLNATLTVRASQAGSHQGHGWETFTDAAIEALAKRREHLVFLLWGSYARRKSAMIDPRRHLILEAPHPSPLSAHRGFFGCKHFSRTNAYLRQHGIAPIVW.

D66 functions as the Proton acceptor in the catalytic mechanism.

This sequence belongs to the uracil-DNA glycosylase (UDG) superfamily. UNG family.

The protein localises to the cytoplasm. It carries out the reaction Hydrolyzes single-stranded DNA or mismatched double-stranded DNA and polynucleotides, releasing free uracil.. Its function is as follows. Excises uracil residues from the DNA which can arise as a result of misincorporation of dUMP residues by DNA polymerase or due to deamination of cytosine. The polypeptide is Uracil-DNA glycosylase (Porphyromonas gingivalis (strain ATCC 33277 / DSM 20709 / CIP 103683 / JCM 12257 / NCTC 11834 / 2561)).